An 830-amino-acid chain; its full sequence is Leucine--tRNA ligase (830 aa).

The 'HIGH' region signature appears at 42 to 52; it reads PYPSGNLHMGH. The 'KMSKS' region signature appears at 585–589; it reads KMSKS. An ATP-binding site is contributed by lysine 588.

Belongs to the class-I aminoacyl-tRNA synthetase family.

The protein localises to the cytoplasm. The catalysed reaction is tRNA(Leu) + L-leucine + ATP = L-leucyl-tRNA(Leu) + AMP + diphosphate. The sequence is that of Leucine--tRNA ligase from Halothermothrix orenii (strain H 168 / OCM 544 / DSM 9562).